Reading from the N-terminus, the 477-residue chain is Putative BTB/POZ domain-containing protein R830 (477 aa).

The 71-residue stretch at 13-83 (SDLELILVDK…FYGIETNNDP (71 aa)) folds into the BTB domain.

Belongs to the mimivirus BTB/WD family.

The polypeptide is Putative BTB/POZ domain-containing protein R830 (Acanthamoeba polyphaga mimivirus (APMV)).